The following is a 334-amino-acid chain: Protein-methionine-sulfoxide reductase catalytic subunit MsrP (334 aa).

Residues 1–44 constitute a signal peptide (tat-type signal); the sequence is MKKNQFLKESDVTAESVFFMKRRQVLKALGISAAALSLPHAAHA. Mo-molybdopterin contacts are provided by residues Asn-88, 91–92, Cys-146, Thr-181, Asn-233, Arg-238, and 249–251; these read YE and GIK.

Belongs to the MsrP family. In terms of assembly, heterodimer of a catalytic subunit (MsrP) and a heme-binding subunit (MsrQ). It depends on Mo-molybdopterin as a cofactor. Post-translationally, predicted to be exported by the Tat system. The position of the signal peptide cleavage has not been experimentally proven.

It is found in the periplasm. The enzyme catalyses L-methionyl-[protein] + a quinone + H2O = L-methionyl-(S)-S-oxide-[protein] + a quinol. It carries out the reaction L-methionyl-[protein] + a quinone + H2O = L-methionyl-(R)-S-oxide-[protein] + a quinol. Its function is as follows. Part of the MsrPQ system that repairs oxidized periplasmic proteins containing methionine sulfoxide residues (Met-O), using respiratory chain electrons. Thus protects these proteins from oxidative-stress damage caused by reactive species of oxygen and chlorine generated by the host defense mechanisms. MsrPQ is essential for the maintenance of envelope integrity under bleach stress, rescuing a wide series of structurally unrelated periplasmic proteins from methionine oxidation, including the primary periplasmic chaperone SurA and the lipoprotein Pal. The catalytic subunit MsrP is non-stereospecific, being able to reduce both (R-) and (S-) diastereoisomers of methionine sulfoxide. The protein is Protein-methionine-sulfoxide reductase catalytic subunit MsrP of Escherichia coli O9:H4 (strain HS).